Consider the following 1040-residue polypeptide: MAAAPALKHWRTTLERVEKFVSPLYFTDCNLRGRLFGASCPVAVLSSFLTPERLPYQEAVQRDFRPAQVGDSFGPTWWTCWFRVELTIPEAWVGQEVHLCWESDGEGLVWRDGEPVQGLTKEGEKTSYVLTDRLGERDPRSLTLYVEVACNGLLGAGKGSMIAAPDPEKMFQLSRAELAVFHRDVHMLLVDLELLLGIAKGLGKDNQRSFQALYTANQMVNVCDPAQPETFPVAQALASRFFGQHGGESQHTIHATGHCHIDTAWLWPFKETVRKCARSWVTALQLMERNPEFIFACSQAQQLEWVKSRYPGLYSRIQEFACRGQFVPVGGTWVEMDGNLPSGEAMVRQFLQGQNFFLQEFGKMCSEFWLPDTFGYSAQLPQIMHGCGIRRFLTQKLSWNLVNSFPHHTFFWEGLDGSRVLVHFPPGDSYGMQGSVEEVLKTVANNRDKGRANHSAFLFGFGDGGGGPTQTMLDRLKRLSNTDGLPRVQLSSPRQLFSALESDSEQLCTWVGELFLELHNGTYTTHAQIKKGNRECERILHDVELLSSLALARSAQFLYPAAQLQHLWRLLLLNQFHDVVTGSCIQMVAEEAMCHYEDIRSHGNTLLSAAAAALCAGEPGPEGLLIVNTLPWKRIEVMALPKPGGAHSLALVTVPSMGYAPVPPPTSLQPLLPQQPVFVVQETDGSVTLDNGIIRVKLDPTGRLTSLVLVASGREAIAEGAVGNQFVLFDDVPLYWDAWDVMDYHLETRKPVLGQAGTLAVGTEGGLRGSAWFLLQISPNSRLSQEVVLDVGCPYVRFHTEVHWHEAHKFLKVEFPARVRSSQATYEIQFGHLQRPTHYNTSWDWARFEVWAHRWMDLSEHGFGLALLNDCKYGASVRGSILSLSLLRAPKAPDATADTGRHEFTYALMPHKGSFQDAGVIQAAYSLNFPLLALPAPSPAPATSWSAFSVSSPAVVLETVKQAESSPQRRSLVLRLYEAHGSHVDCWLHLSLPVQEAILCDLLERPDPAGHLTLRDNRLKLTFSPFQVLSLLLVLQPPPH.

Residues His-260, Asp-262, Asp-372, and His-577 each coordinate Co(2+). Catalysis depends on Asp-372, which acts as the Nucleophile.

It belongs to the glycosyl hydrolase 38 family. Co(2+) serves as cofactor.

It is found in the cytoplasm. It catalyses the reaction Hydrolysis of terminal, non-reducing alpha-D-mannose residues in alpha-D-mannosides.. Strongly inhibited by swainsonine. Also inhibited to a lesser extent by deoxymannojirimycin (DMM). In terms of biological role, cleaves alpha 1,2-, alpha 1,3-, and alpha 1,6-linked mannose residues on cytoplasmic free oligosaccharides generated by N-glycoprotein degradation pathways. The polypeptide is Alpha-mannosidase 2C1 (MAN2C1) (Homo sapiens (Human)).